We begin with the raw amino-acid sequence, 879 residues long: Alanine--tRNA ligase (879 aa).

Positions 567, 571, 669, and 673 each coordinate Zn(2+).

This sequence belongs to the class-II aminoacyl-tRNA synthetase family. The cofactor is Zn(2+).

The protein resides in the cytoplasm. The catalysed reaction is tRNA(Ala) + L-alanine + ATP = L-alanyl-tRNA(Ala) + AMP + diphosphate. Catalyzes the attachment of alanine to tRNA(Ala) in a two-step reaction: alanine is first activated by ATP to form Ala-AMP and then transferred to the acceptor end of tRNA(Ala). Also edits incorrectly charged Ser-tRNA(Ala) and Gly-tRNA(Ala) via its editing domain. In Levilactobacillus brevis (strain ATCC 367 / BCRC 12310 / CIP 105137 / JCM 1170 / LMG 11437 / NCIMB 947 / NCTC 947) (Lactobacillus brevis), this protein is Alanine--tRNA ligase.